Reading from the N-terminus, the 311-residue chain is Lipoyl synthase (311 aa).

The [4Fe-4S] cluster site is built by C47, C52, C58, C73, C77, C80, and S286. In terms of domain architecture, Radical SAM core spans 59–276; sequence WSRHTATYLA…RSVGESLGLF (218 aa).

The protein belongs to the radical SAM superfamily. Lipoyl synthase family. It depends on [4Fe-4S] cluster as a cofactor.

It is found in the cytoplasm. The enzyme catalyses [[Fe-S] cluster scaffold protein carrying a second [4Fe-4S](2+) cluster] + N(6)-octanoyl-L-lysyl-[protein] + 2 oxidized [2Fe-2S]-[ferredoxin] + 2 S-adenosyl-L-methionine + 4 H(+) = [[Fe-S] cluster scaffold protein] + N(6)-[(R)-dihydrolipoyl]-L-lysyl-[protein] + 4 Fe(3+) + 2 hydrogen sulfide + 2 5'-deoxyadenosine + 2 L-methionine + 2 reduced [2Fe-2S]-[ferredoxin]. The protein operates within protein modification; protein lipoylation via endogenous pathway; protein N(6)-(lipoyl)lysine from octanoyl-[acyl-carrier-protein]: step 2/2. In terms of biological role, catalyzes the radical-mediated insertion of two sulfur atoms into the C-6 and C-8 positions of the octanoyl moiety bound to the lipoyl domains of lipoate-dependent enzymes, thereby converting the octanoylated domains into lipoylated derivatives. This Chlamydia trachomatis serovar L2 (strain ATCC VR-902B / DSM 19102 / 434/Bu) protein is Lipoyl synthase.